We begin with the raw amino-acid sequence, 299 residues long: MTPTLPDIKPIPIKERSSVVFLGRGELDVIDGAFVLVDTNGIRMQIPVGGLASLMLEPGSRVSHAAVSLASKVGCLLVFVGEGGVRLYSVGHPGGARSDRLLYQARLALDEVLRLKVVKKMFSLRFGEDFSDAYSVEQLRGLEGVRVREGYRKIARDTGVIWNGRRYDPHSWGSADLPNRCLSAATASLYGICEAAVLAAGYSPSIGFLHTGKPLSFVYDIADLFKFETVVPAAFKTAALNPREPEREVRYACRDLFRETQLLKRIIPTIEEVLTAGGISAPAPPDWVVPPAIPVDEEG.

3 residues coordinate Mn(2+): glutamate 143, histidine 210, and aspartate 223.

This sequence belongs to the CRISPR-associated endonuclease Cas1 family. In terms of assembly, homodimer, forms a heterotetramer with a Cas2 homodimer. The cofactor is Mg(2+). Requires Mn(2+) as cofactor.

CRISPR (clustered regularly interspaced short palindromic repeat), is an adaptive immune system that provides protection against mobile genetic elements (viruses, transposable elements and conjugative plasmids). CRISPR clusters contain spacers, sequences complementary to antecedent mobile elements, and target invading nucleic acids. CRISPR clusters are transcribed and processed into CRISPR RNA (crRNA). Acts as a dsDNA endonuclease. Involved in the integration of spacer DNA into the CRISPR cassette. This is CRISPR-associated endonuclease Cas1 3 from Methanospirillum hungatei JF-1 (strain ATCC 27890 / DSM 864 / NBRC 100397 / JF-1).